We begin with the raw amino-acid sequence, 158 residues long: Transcription elongation factor GreA (158 aa).

A coiled-coil region spans residues T3–A75.

The protein belongs to the GreA/GreB family.

In terms of biological role, necessary for efficient RNA polymerase transcription elongation past template-encoded arresting sites. The arresting sites in DNA have the property of trapping a certain fraction of elongating RNA polymerases that pass through, resulting in locked ternary complexes. Cleavage of the nascent transcript by cleavage factors such as GreA or GreB allows the resumption of elongation from the new 3'terminus. GreA releases sequences of 2 to 3 nucleotides. This Bacillus cereus (strain ATCC 14579 / DSM 31 / CCUG 7414 / JCM 2152 / NBRC 15305 / NCIMB 9373 / NCTC 2599 / NRRL B-3711) protein is Transcription elongation factor GreA.